The chain runs to 1193 residues: Pyruvate carboxylase (1193 aa).

The Biotin carboxylation domain maps to 41–493 (QFQKILVANR…WTTFIDDTTE (453 aa)). The ATP site is built by lysine 159, glutamate 243, and histidine 278. The ATP-grasp domain maps to 163 to 360 (RQLAIRCNVP…IVAAQIQIAA (198 aa)). The active site involves arginine 335. Positions 579–847 (CLIMDTTWRD…DPGLNSAHVR (269 aa)) constitute a Pyruvate carboxyltransferase domain. Residues 587 to 591 (RDAHQ) and arginine 660 each bind substrate. Aspartate 588 lines the a divalent metal cation pocket. Positions 756, 786, and 788 each coordinate a divalent metal cation. Lysine 756 is modified (N6-carboxylysine). Residue threonine 921 coordinates substrate. A Biotinyl-binding domain is found at 1116-1191 (KADVGDSSQV…DGQDLVCKIT (76 aa)). Position 1157 is an N6-biotinyllysine (lysine 1157).

The cofactor is biotin. Zn(2+) is required as a cofactor.

The protein resides in the cytoplasm. It catalyses the reaction hydrogencarbonate + pyruvate + ATP = oxaloacetate + ADP + phosphate + H(+). It participates in carbohydrate biosynthesis; gluconeogenesis. In terms of biological role, pyruvate carboxylase catalyzes a 2-step reaction, involving the ATP-dependent carboxylation of the covalently attached biotin in the first step and the transfer of the carboxyl group to pyruvate in the second. The sequence is that of Pyruvate carboxylase (pyc) from Aspergillus terreus (strain NIH 2624 / FGSC A1156).